The following is a 292-amino-acid chain: Elongation factor Ts (292 aa).

The tract at residues 80–83 (TDFV) is involved in Mg(2+) ion dislocation from EF-Tu.

Belongs to the EF-Ts family.

Its subcellular location is the cytoplasm. Its function is as follows. Associates with the EF-Tu.GDP complex and induces the exchange of GDP to GTP. It remains bound to the aminoacyl-tRNA.EF-Tu.GTP complex up to the GTP hydrolysis stage on the ribosome. The sequence is that of Elongation factor Ts from Cupriavidus metallidurans (strain ATCC 43123 / DSM 2839 / NBRC 102507 / CH34) (Ralstonia metallidurans).